Reading from the N-terminus, the 102-residue chain is Large ribosomal subunit protein uL24 (102 aa).

The tract at residues 44 to 65 (HAKPSQDNPQGGILNQEAPIHS) is disordered.

Belongs to the universal ribosomal protein uL24 family. Part of the 50S ribosomal subunit.

Functionally, one of two assembly initiator proteins, it binds directly to the 5'-end of the 23S rRNA, where it nucleates assembly of the 50S subunit. In terms of biological role, one of the proteins that surrounds the polypeptide exit tunnel on the outside of the subunit. This is Large ribosomal subunit protein uL24 from Shouchella clausii (strain KSM-K16) (Alkalihalobacillus clausii).